A 655-amino-acid polypeptide reads, in one-letter code: Fructose-1,6-bisphosphatase class 3 (655 aa).

This sequence belongs to the FBPase class 3 family. Requires Mn(2+) as cofactor.

It catalyses the reaction beta-D-fructose 1,6-bisphosphate + H2O = beta-D-fructose 6-phosphate + phosphate. It participates in carbohydrate biosynthesis; gluconeogenesis. This chain is Fructose-1,6-bisphosphatase class 3, found in Porphyromonas gingivalis (strain ATCC BAA-308 / W83).